Here is an 85-residue protein sequence, read N- to C-terminus: Toxin BmKT (85 aa).

Positions 1–19 are cleaved as a signal peptide; the sequence is MNYLVFFSLALLLMTGVES. Residues 21–83 enclose the LCN-type CS-alpha/beta domain; the sequence is RDGYIADDKN…VPIRVPGKCN (63 aa). Disulfide bonds link C31–C82, C35–C55, C41–C65, and C45–C67.

This sequence belongs to the long (4 C-C) scorpion toxin superfamily. Sodium channel inhibitor family. Alpha subfamily. Expressed by the venom gland.

The protein localises to the secreted. Its function is as follows. Binds to sodium channels (Nav) and inhibits the inactivation of the activated channels, thereby blocking neuronal transmission. Tested on mice, has antitumor effect and strong inhibitory effect on pain. The sequence is that of Toxin BmKT from Olivierus martensii (Manchurian scorpion).